The primary structure comprises 118 residues: MNTYAIIDTGGEQLRVEPGRFYDMRHFTLLNPSILDSNTKVLIYRVLMIHHESNIALGDSWLEDATIKGRVLHSHFKDKITIYKMRSKKKMRRKLGYRLNLARFVVDSICFDGKEFYK.

It belongs to the bacterial ribosomal protein bL21 family. Part of the 50S ribosomal subunit.

Its subcellular location is the plastid. It is found in the chloroplast. Its function is as follows. This protein binds to 23S rRNA. The chain is Large ribosomal subunit protein bL21c from Anthoceros angustus (Hornwort).